Reading from the N-terminus, the 660-residue chain is Translation factor GUF1, mitochondrial (660 aa).

Residues 1–42 constitute a mitochondrion transit peptide; it reads MRSCVRTASSVLQSWRAHTVLRNGCPLPSRTLERLPRLARSY. The tr-type G domain occupies 62–242; that stretch reads ERYRNFCIVA…AVVEKIPAPV (181 aa). GTP contacts are provided by residues 71–78, 135–139, and 189–192; these read AHVDHGKS, DTPGH, and NKVD.

This sequence belongs to the TRAFAC class translation factor GTPase superfamily. Classic translation factor GTPase family. LepA subfamily.

Its subcellular location is the mitochondrion inner membrane. It carries out the reaction GTP + H2O = GDP + phosphate + H(+). Its function is as follows. Promotes mitochondrial protein synthesis. May act as a fidelity factor of the translation reaction, by catalyzing a one-codon backward translocation of tRNAs on improperly translocated ribosomes. Binds to mitochondrial ribosomes in a GTP-dependent manner. The chain is Translation factor GUF1, mitochondrial from Phaeosphaeria nodorum (strain SN15 / ATCC MYA-4574 / FGSC 10173) (Glume blotch fungus).